Consider the following 794-residue polypeptide: cAMP and cAMP-inhibited cGMP 3',5'-cyclic phosphodiesterase 10A (794 aa).

Residues 296–297, 340–341, T374, Q393, and H525 each bind 3',5'-cyclic AMP; these read RC and IA. The 318-residue stretch at 452 to 769 folds into the PDEase domain; that stretch reads TSEEWQGLMH…NQWEKVIRGE (318 aa). Catalysis depends on H525, which acts as the Proton donor. H525 serves as a coordination point for 3',5'-cyclic GMP. The a divalent metal cation site is built by H529, H563, D564, and D674. A 3',5'-cyclic AMP-binding site is contributed by Q726. Q726 contacts 3',5'-cyclic GMP.

The protein belongs to the cyclic nucleotide phosphodiesterase family. In terms of assembly, homodimer. It depends on a divalent metal cation as a cofactor. Detected in striatum and testis (at protein level). Detected in whole brain, hippocampus, olfactory bulb, striatum neurons and testis.

Its subcellular location is the cytoplasm. It localises to the cytosol. It catalyses the reaction a nucleoside 3',5'-cyclic phosphate + H2O = a nucleoside 5'-phosphate + H(+). It carries out the reaction 3',5'-cyclic AMP + H2O = AMP + H(+). The enzyme catalyses 3',5'-cyclic GMP + H2O = GMP + H(+). It functions in the pathway purine metabolism; 3',5'-cyclic AMP degradation; AMP from 3',5'-cyclic AMP: step 1/1. The protein operates within purine metabolism; 3',5'-cyclic GMP degradation; GMP from 3',5'-cyclic GMP: step 1/1. Its activity is regulated as follows. Inhibited by dipyridamole and moderately by IBMX, zaprinast and rolipram. In terms of biological role, plays a role in signal transduction by regulating the intracellular concentration of cyclic nucleotides. Can hydrolyze both cAMP and cGMP, but has higher affinity for cAMP and is more efficient with cAMP as substrate. The chain is cAMP and cAMP-inhibited cGMP 3',5'-cyclic phosphodiesterase 10A (Pde10a) from Rattus norvegicus (Rat).